The chain runs to 273 residues: Polyamine aminopropyltransferase (273 aa).

The 234-residue stretch at 5–238 (ENWFSERYSD…GFWSFTVASP (234 aa)) folds into the PABS domain. Q34 serves as a coordination point for S-methyl-5'-thioadenosine. Spermidine is bound by residues H65 and D90. S-methyl-5'-thioadenosine contacts are provided by residues E109 and 140 to 141 (DG). D158 (proton acceptor) is an active-site residue. 158 to 161 (DSTD) serves as a coordination point for spermidine. P165 provides a ligand contact to S-methyl-5'-thioadenosine.

The protein belongs to the spermidine/spermine synthase family. In terms of assembly, homodimer or homotetramer.

It is found in the cytoplasm. The catalysed reaction is S-adenosyl 3-(methylsulfanyl)propylamine + putrescine = S-methyl-5'-thioadenosine + spermidine + H(+). Its pathway is amine and polyamine biosynthesis; spermidine biosynthesis; spermidine from putrescine: step 1/1. Its function is as follows. Catalyzes the irreversible transfer of a propylamine group from the amino donor S-adenosylmethioninamine (decarboxy-AdoMet) to putrescine (1,4-diaminobutane) to yield spermidine. In Thermoplasma acidophilum (strain ATCC 25905 / DSM 1728 / JCM 9062 / NBRC 15155 / AMRC-C165), this protein is Polyamine aminopropyltransferase.